Consider the following 283-residue polypeptide: Bis(5'-nucleosyl)-tetraphosphatase, symmetrical (283 aa).

The protein belongs to the Ap4A hydrolase family.

The enzyme catalyses P(1),P(4)-bis(5'-adenosyl) tetraphosphate + H2O = 2 ADP + 2 H(+). In terms of biological role, hydrolyzes diadenosine 5',5'''-P1,P4-tetraphosphate to yield ADP. The polypeptide is Bis(5'-nucleosyl)-tetraphosphatase, symmetrical (Pseudomonas paraeruginosa (strain DSM 24068 / PA7) (Pseudomonas aeruginosa (strain PA7))).